A 311-amino-acid polypeptide reads, in one-letter code: Ribosomal RNA small subunit methyltransferase H (311 aa).

S-adenosyl-L-methionine contacts are provided by residues 33–35, Asp53, Phe80, Asp101, and Gln108; that span reads AGH.

Belongs to the methyltransferase superfamily. RsmH family.

It is found in the cytoplasm. The enzyme catalyses cytidine(1402) in 16S rRNA + S-adenosyl-L-methionine = N(4)-methylcytidine(1402) in 16S rRNA + S-adenosyl-L-homocysteine + H(+). Its function is as follows. Specifically methylates the N4 position of cytidine in position 1402 (C1402) of 16S rRNA. This Alkaliphilus oremlandii (strain OhILAs) (Clostridium oremlandii (strain OhILAs)) protein is Ribosomal RNA small subunit methyltransferase H.